The primary structure comprises 363 residues: Ribosome-binding ATPase YchF (363 aa).

The 255-residue stretch at 3-257 (FKCGFVGLPN…VSAYDHLSLK (255 aa)) folds into the OBG-type G domain. 12–17 (NVGKST) provides a ligand contact to ATP. Positions 16 and 36 each coordinate Mg(2+). One can recognise a TGS domain in the interval 278–361 (NLITFFTAGK…CDGDIIHVLY (84 aa)).

It belongs to the TRAFAC class OBG-HflX-like GTPase superfamily. OBG GTPase family. YchF/OLA1 subfamily. Mg(2+) is required as a cofactor.

ATPase that binds to both the 70S ribosome and the 50S ribosomal subunit in a nucleotide-independent manner. This is Ribosome-binding ATPase YchF from Buchnera aphidicola subsp. Baizongia pistaciae (strain Bp).